A 490-amino-acid chain; its full sequence is Muscarinic acetylcholine receptor M4 (490 aa).

Residues 1 to 42 (MHNLSAQPWQAKMANLTYDNVTLSNRSEVAIQPPTNYKTVEL) lie on the Extracellular side of the membrane. Residues Asn3, Asn15, Asn20, and Asn25 are each glycosylated (N-linked (GlcNAc...) asparagine). The chain crosses the membrane as a helical span at residues 43-64 (VFIATVTGSLSLVTVVGNILVM). The Cytoplasmic portion of the chain corresponds to 65 to 78 (LSIKVNRQLQTVNN). The helical transmembrane segment at 79 to 99 (YFLFSLACADLIIGVFSMNLY) threads the bilayer. The Extracellular segment spans residues 100-116 (TVYIIKGYWPLGAVVCD). The cysteines at positions 115 and 195 are disulfide-linked. Residues 117 to 138 (LWLALDYVVSNASVMNLLIISF) form a helical membrane-spanning segment. At 139-158 (DRYFCVTKPLTYPARRTTKM) the chain is on the cytoplasmic side. The chain crosses the membrane as a helical span at residues 159–181 (AGLMIAAAWILSFILWAPAILFW). Topologically, residues 182-203 (QFIVGKRTVHERECYIQFLSNP) are extracellular. The helical transmembrane segment at 204 to 226 (AVTFGTAIAAFYLPVVIMTVLYI) threads the bilayer. Over 227–412 (HISLASRSRV…AAREKKVTRT (186 aa)) the chain is Cytoplasmic. Residues 236–250 (VRRHKPESRKERKGK) are compositionally biased toward basic residues. The disordered stretch occupies residues 236-343 (VRRHKPESRK…HPRVNPTSKW (108 aa)). Basic and acidic residues predominate over residues 270–285 (RAVEVKEEVRNGKVDD). 2 stretches are compositionally biased toward polar residues: residues 287 to 296 (PSAQTEATGQ) and 304 to 314 (NESSTVSMTQT). Residues 413–433 (IFAILLAFILTWTPYNVMVLI) form a helical membrane-spanning segment. At 434 to 447 (NTFCETCVPETVWS) the chain is on the extracellular side. Residues 448–467 (IGYWLCYVNSTINPACYALC) form a helical membrane-spanning segment. Topologically, residues 468 to 490 (NATFKKTFKHLLMCQYRNIGTAR) are cytoplasmic.

This sequence belongs to the G-protein coupled receptor 1 family. Muscarinic acetylcholine receptor subfamily. CHRM4 sub-subfamily. Expressed in heart and brain.

It localises to the cell membrane. Its subcellular location is the postsynaptic cell membrane. Its function is as follows. The muscarinic acetylcholine receptor mediates various cellular responses, including inhibition of adenylate cyclase, breakdown of phosphoinositides and modulation of potassium channels through the action of G proteins. Primary transducing effect is inhibition of adenylate cyclase. May couple to multiple functional responses in cell lines. In Gallus gallus (Chicken), this protein is Muscarinic acetylcholine receptor M4 (CHRM4).